The chain runs to 143 residues: Sarcoplasmic/endoplasmic reticulum calcium ATPase (143 aa).

It belongs to the cation transport ATPase (P-type) (TC 3.A.3) family. Type IIA subfamily.

Its subcellular location is the endoplasmic reticulum membrane. It is found in the sarcoplasmic reticulum membrane. The catalysed reaction is Ca(2+)(in) + ATP + H2O = Ca(2+)(out) + ADP + phosphate + H(+). Functionally, this magnesium-dependent enzyme catalyzes the hydrolysis of ATP coupled with the transport of calcium. Transports calcium ions from the cytosol into the sarcoplasmic/endoplasmic reticulum lumen. Contributes to calcium sequestration involved in muscular excitation/contraction. This Chionoecetes opilio (Atlantic snow crab) protein is Sarcoplasmic/endoplasmic reticulum calcium ATPase.